The primary structure comprises 160 residues: S-ribosylhomocysteine lyase (160 aa).

Fe cation contacts are provided by H57, H61, and C127.

It belongs to the LuxS family. In terms of assembly, homodimer. Fe cation serves as cofactor.

It catalyses the reaction S-(5-deoxy-D-ribos-5-yl)-L-homocysteine = (S)-4,5-dihydroxypentane-2,3-dione + L-homocysteine. Functionally, involved in the synthesis of autoinducer 2 (AI-2) which is secreted by bacteria and is used to communicate both the cell density and the metabolic potential of the environment. The regulation of gene expression in response to changes in cell density is called quorum sensing. Catalyzes the transformation of S-ribosylhomocysteine (RHC) to homocysteine (HC) and 4,5-dihydroxy-2,3-pentadione (DPD). This is S-ribosylhomocysteine lyase from Streptococcus pneumoniae (strain CGSP14).